The chain runs to 59 residues: FNDEKGFGFITPESGPDLFVHFRAIQGNGFKSLKEGQKVTFIAVQGQKGMQADKVQAEA.

Positions 1–55 (FNDEKGFGFITPESGPDLFVHFRAIQGNGFKSLKEGQKVTFIAVQGQKGMQADKV) constitute a CSD domain.

It is found in the cytoplasm. Functionally, affects cell viability at low temperatures. This Pseudomonas fragi protein is Temperature acclimation protein A (tapA).